The chain runs to 605 residues: Sulfite reductase [NADPH] flavoprotein alpha-component (605 aa).

Positions 70–208 constitute a Flavodoxin-like domain; that stretch reads LTIIYASQTG…PAAEWRVKAL (139 aa). Residues 76 to 81, 123 to 126, and 159 to 168 contribute to the FMN site; these read SQTGNA, STHG, and LGDSSYEFFC. Positions 240–454 constitute an FAD-binding FR-type domain; it reads QNPYEATLLT…VEENNNFKLP (215 aa). FAD is bound by residues Thr328, Gly362, 392–395, 410–412, and 425–428; these read RLYS, TVG, and GGAS. NADP(+)-binding positions include 525–526, 531–535, and Asp567; these read SR and KVYVQ. Tyr605 is a binding site for FAD.

Belongs to the NADPH-dependent sulphite reductase flavoprotein subunit CysJ family. The protein in the N-terminal section; belongs to the flavodoxin family. This sequence in the C-terminal section; belongs to the flavoprotein pyridine nucleotide cytochrome reductase family. Alpha(8)-beta(8). The alpha component is a flavoprotein, the beta component is a hemoprotein. It depends on FAD as a cofactor. The cofactor is FMN.

The enzyme catalyses hydrogen sulfide + 3 NADP(+) + 3 H2O = sulfite + 3 NADPH + 4 H(+). It functions in the pathway sulfur metabolism; hydrogen sulfide biosynthesis; hydrogen sulfide from sulfite (NADPH route): step 1/1. Functionally, component of the sulfite reductase complex that catalyzes the 6-electron reduction of sulfite to sulfide. This is one of several activities required for the biosynthesis of L-cysteine from sulfate. The flavoprotein component catalyzes the electron flow from NADPH -&gt; FAD -&gt; FMN to the hemoprotein component. The sequence is that of Sulfite reductase [NADPH] flavoprotein alpha-component from Photobacterium profundum (strain SS9).